A 133-amino-acid polypeptide reads, in one-letter code: Small ribosomal subunit protein uS8 (133 aa).

Belongs to the universal ribosomal protein uS8 family. As to quaternary structure, part of the 30S ribosomal subunit.

In terms of biological role, one of the primary rRNA binding proteins, it binds directly to 16S rRNA central domain where it helps coordinate assembly of the platform of the 30S subunit. This is Small ribosomal subunit protein uS8 from Metallosphaera sedula (strain ATCC 51363 / DSM 5348 / JCM 9185 / NBRC 15509 / TH2).